The sequence spans 454 residues: NADP-specific glutamate dehydrogenase (454 aa).

Serine 2 is subject to N-acetylserine. Lysine 114 is a catalytic residue.

This sequence belongs to the Glu/Leu/Phe/Val dehydrogenases family. As to quaternary structure, homohexamer.

The enzyme catalyses L-glutamate + NADP(+) + H2O = 2-oxoglutarate + NH4(+) + NADPH + H(+). The polypeptide is NADP-specific glutamate dehydrogenase (gdh) (Neurospora crassa (strain ATCC 24698 / 74-OR23-1A / CBS 708.71 / DSM 1257 / FGSC 987)).